Consider the following 333-residue polypeptide: D-fructose 1,6-bisphosphatase class 2/sedoheptulose 1,7-bisphosphatase (333 aa).

Mn(2+) contacts are provided by Asp-33, Glu-57, Asp-85, and Glu-88. Substrate-binding positions include 88 to 90, Tyr-119, 164 to 166, and 186 to 188; these read EGT, RAR, and DGD. A Mn(2+)-binding site is contributed by Glu-213.

The protein belongs to the FBPase class 2 family. In terms of assembly, homotetramer. It depends on Mn(2+) as a cofactor.

It catalyses the reaction beta-D-fructose 1,6-bisphosphate + H2O = beta-D-fructose 6-phosphate + phosphate. The enzyme catalyses D-sedoheptulose 1,7-bisphosphate + H2O = D-sedoheptulose 7-phosphate + phosphate. Its pathway is carbohydrate biosynthesis; Calvin cycle. Functionally, catalyzes the hydrolysis of fructose 1,6-bisphosphate (Fru 1,6-P2) and sedoheptulose 1,7-bisphosphate (Sed 1,7-P2) to fructose 6-phosphate and sedoheptulose 7-phosphate, respectively. This Prochlorococcus marinus subsp. pastoris (strain CCMP1986 / NIES-2087 / MED4) protein is D-fructose 1,6-bisphosphatase class 2/sedoheptulose 1,7-bisphosphatase.